Here is a 311-residue protein sequence, read N- to C-terminus: Acetyl-coenzyme A carboxylase carboxyl transferase subunit alpha (311 aa).

In terms of domain architecture, CoA carboxyltransferase C-terminal spans 36–286 (NLEKEVAKVY…ASYFVSKLEK (251 aa)).

This sequence belongs to the AccA family. As to quaternary structure, acetyl-CoA carboxylase is a heterohexamer composed of biotin carboxyl carrier protein (AccB), biotin carboxylase (AccC) and two subunits each of ACCase subunit alpha (AccA) and ACCase subunit beta (AccD).

The protein resides in the cytoplasm. It catalyses the reaction N(6)-carboxybiotinyl-L-lysyl-[protein] + acetyl-CoA = N(6)-biotinyl-L-lysyl-[protein] + malonyl-CoA. It participates in lipid metabolism; malonyl-CoA biosynthesis; malonyl-CoA from acetyl-CoA: step 1/1. Functionally, component of the acetyl coenzyme A carboxylase (ACC) complex. First, biotin carboxylase catalyzes the carboxylation of biotin on its carrier protein (BCCP) and then the CO(2) group is transferred by the carboxyltransferase to acetyl-CoA to form malonyl-CoA. This chain is Acetyl-coenzyme A carboxylase carboxyl transferase subunit alpha, found in Campylobacter curvus (strain 525.92).